Reading from the N-terminus, the 95-residue chain is Large ribosomal subunit protein uL23 (95 aa).

Belongs to the universal ribosomal protein uL23 family. Part of the 50S ribosomal subunit. Contacts protein L29, and trigger factor when it is bound to the ribosome.

One of the early assembly proteins it binds 23S rRNA. One of the proteins that surrounds the polypeptide exit tunnel on the outside of the ribosome. Forms the main docking site for trigger factor binding to the ribosome. This chain is Large ribosomal subunit protein uL23, found in Desulforamulus reducens (strain ATCC BAA-1160 / DSM 100696 / MI-1) (Desulfotomaculum reducens).